Consider the following 104-residue polypeptide: MAAKIRRDDEVIVLTGKDKGKRGKVKNVLSSGKIIVEGINLVKKHQKPVPALNQPGGIVEKEAAIQVSNVALFNTVTGKADRVGFRFEDGKKVRFFKSNSETIK.

This sequence belongs to the universal ribosomal protein uL24 family. In terms of assembly, part of the 50S ribosomal subunit.

Its function is as follows. One of two assembly initiator proteins, it binds directly to the 5'-end of the 23S rRNA, where it nucleates assembly of the 50S subunit. One of the proteins that surrounds the polypeptide exit tunnel on the outside of the subunit. The sequence is that of Large ribosomal subunit protein uL24 from Enterobacter sp. (strain 638).